A 194-amino-acid polypeptide reads, in one-letter code: Crossover junction endodeoxyribonuclease RuvC (194 aa).

Residues aspartate 7, glutamate 68, and aspartate 141 contribute to the active site. Aspartate 7, glutamate 68, and aspartate 141 together coordinate Mg(2+).

Belongs to the RuvC family. As to quaternary structure, homodimer which binds Holliday junction (HJ) DNA. The HJ becomes 2-fold symmetrical on binding to RuvC with unstacked arms; it has a different conformation from HJ DNA in complex with RuvA. In the full resolvosome a probable DNA-RuvA(4)-RuvB(12)-RuvC(2) complex forms which resolves the HJ. The cofactor is Mg(2+).

It is found in the cytoplasm. The catalysed reaction is Endonucleolytic cleavage at a junction such as a reciprocal single-stranded crossover between two homologous DNA duplexes (Holliday junction).. Its function is as follows. The RuvA-RuvB-RuvC complex processes Holliday junction (HJ) DNA during genetic recombination and DNA repair. Endonuclease that resolves HJ intermediates. Cleaves cruciform DNA by making single-stranded nicks across the HJ at symmetrical positions within the homologous arms, yielding a 5'-phosphate and a 3'-hydroxyl group; requires a central core of homology in the junction. The consensus cleavage sequence is 5'-(A/T)TT(C/G)-3'. Cleavage occurs on the 3'-side of the TT dinucleotide at the point of strand exchange. HJ branch migration catalyzed by RuvA-RuvB allows RuvC to scan DNA until it finds its consensus sequence, where it cleaves and resolves the cruciform DNA. This Mycolicibacterium vanbaalenii (strain DSM 7251 / JCM 13017 / BCRC 16820 / KCTC 9966 / NRRL B-24157 / PYR-1) (Mycobacterium vanbaalenii) protein is Crossover junction endodeoxyribonuclease RuvC.